A 630-amino-acid polypeptide reads, in one-letter code: Pentatricopeptide repeat-containing protein At1g26460, mitochondrial (630 aa).

The N-terminal 115 residues, 1–115, are a transit peptide targeting the mitochondrion; it reads MASHLFTRSR…RALSETLDMN (115 aa). Positions 42-79 are disordered; sequence LLATESTDHDPSNHQSTSTPLPPNPATGSPLYQENWRS. A compositionally biased stretch (polar residues) spans 67–77; the sequence is ATGSPLYQENW. PPR repeat units follow at residues 154–189, 190–224, 227–261, 468–503, 504–538, and 539–573; these read DVNL…SVEP, NTAS…GKDS, DDES…GYML, SVAA…GLTP, NIDS…GVKP, and DSRT…GFEP.

Belongs to the PPR family. P subfamily.

It localises to the mitochondrion. The protein is Pentatricopeptide repeat-containing protein At1g26460, mitochondrial of Arabidopsis thaliana (Mouse-ear cress).